Here is a 497-residue protein sequence, read N- to C-terminus: Aspartyl/glutamyl-tRNA(Asn/Gln) amidotransferase subunit B (497 aa).

This sequence belongs to the GatB/GatE family. GatB subfamily. In terms of assembly, heterotrimer of A, B and C subunits.

The catalysed reaction is L-glutamyl-tRNA(Gln) + L-glutamine + ATP + H2O = L-glutaminyl-tRNA(Gln) + L-glutamate + ADP + phosphate + H(+). It carries out the reaction L-aspartyl-tRNA(Asn) + L-glutamine + ATP + H2O = L-asparaginyl-tRNA(Asn) + L-glutamate + ADP + phosphate + 2 H(+). Its function is as follows. Allows the formation of correctly charged Asn-tRNA(Asn) or Gln-tRNA(Gln) through the transamidation of misacylated Asp-tRNA(Asn) or Glu-tRNA(Gln) in organisms which lack either or both of asparaginyl-tRNA or glutaminyl-tRNA synthetases. The reaction takes place in the presence of glutamine and ATP through an activated phospho-Asp-tRNA(Asn) or phospho-Glu-tRNA(Gln). In Nocardioides sp. (strain ATCC BAA-499 / JS614), this protein is Aspartyl/glutamyl-tRNA(Asn/Gln) amidotransferase subunit B.